The chain runs to 454 residues: Response regulator PleD (454 aa).

2 consecutive Response regulatory domains span residues 4–120 (RILV…RSLT) and 155–269 (RVLI…KTQI). Residues Asp9, Asp10, Asp53, and Met55 each coordinate Mg(2+). At Asp53 the chain carries 4-aspartylphosphate. One can recognise a GGDEF domain in the interval 319–454 (DPVSALLIDI…GRNAVVGKAA (136 aa)). Residues Asn335 and Asp344 each coordinate substrate. Glu370 serves as the catalytic Proton acceptor.

In terms of assembly, homodimer. Inactive monomer in solution. Phosphorylated by PleC and DivJ. Phosphorylation stimulates cyclase activity.

It is found in the cytoplasm. It carries out the reaction 2 GTP = 3',3'-c-di-GMP + 2 diphosphate. It functions in the pathway purine metabolism; 3',5'-cyclic di-GMP biosynthesis. With respect to regulation, allosterically inhibited by the product c-di-GMP. In terms of biological role, response regulator that is part of a signal transduction pathway controlling cell differentiation in the swarmer-to-stalked cell transition. Catalyzes the condensation of two GTP molecules to the cyclic dinucleotide di-GMP (c-di-GMP), which acts as a secondary messenger. This is Response regulator PleD (pleD) from Caulobacter vibrioides (strain ATCC 19089 / CIP 103742 / CB 15) (Caulobacter crescentus).